The primary structure comprises 439 residues: Histidine--tRNA ligase (439 aa).

The protein belongs to the class-II aminoacyl-tRNA synthetase family. As to quaternary structure, homodimer.

Its subcellular location is the cytoplasm. It carries out the reaction tRNA(His) + L-histidine + ATP = L-histidyl-tRNA(His) + AMP + diphosphate + H(+). The protein is Histidine--tRNA ligase of Leptospira interrogans serogroup Icterohaemorrhagiae serovar copenhageni (strain Fiocruz L1-130).